A 149-amino-acid polypeptide reads, in one-letter code: Large ribosomal subunit protein eL19 (149 aa).

The segment at Glu46 to Ile99 is disordered. Basic residues predominate over residues Ser59–Ser85. Basic and acidic residues predominate over residues Gln89–Ile99.

Belongs to the eukaryotic ribosomal protein eL19 family. Part of the 50S ribosomal subunit.

Its function is as follows. Binds to the 23S rRNA. This chain is Large ribosomal subunit protein eL19, found in Natronomonas pharaonis (strain ATCC 35678 / DSM 2160 / CIP 103997 / JCM 8858 / NBRC 14720 / NCIMB 2260 / Gabara) (Halobacterium pharaonis).